Consider the following 265-residue polypeptide: Mlc titration factor A (265 aa).

His-111, His-148, His-152, and Glu-211 together coordinate Zn(2+).

This sequence belongs to the MtfA family. Interacts with Mlc. It depends on Zn(2+) as a cofactor.

It localises to the cytoplasm. Its function is as follows. Involved in the modulation of the activity of the glucose-phosphotransferase system (glucose-PTS). Interacts with the transcriptional repressor Mlc, preventing its interaction with DNA and leading to the modulation of expression of genes regulated by Mlc, including ptsG, which encodes the PTS system glucose-specific EIICB component. In terms of biological role, shows zinc-dependent metallopeptidase activity. The protein is Mlc titration factor A of Salmonella typhi.